We begin with the raw amino-acid sequence, 245 residues long: UDP-2,3-diacylglucosamine hydrolase (245 aa).

Residues D8, H10, D41, N79, and H114 each contribute to the Mn(2+) site. Position 79 to 80 (79 to 80 (NR)) interacts with substrate. Residues D122, S160, K164, K167, and H195 each contribute to the substrate site. 2 residues coordinate Mn(2+): H195 and H197.

This sequence belongs to the LpxH family. The cofactor is Mn(2+).

The protein resides in the cell inner membrane. It catalyses the reaction UDP-2-N,3-O-bis[(3R)-3-hydroxytetradecanoyl]-alpha-D-glucosamine + H2O = 2-N,3-O-bis[(3R)-3-hydroxytetradecanoyl]-alpha-D-glucosaminyl 1-phosphate + UMP + 2 H(+). It functions in the pathway glycolipid biosynthesis; lipid IV(A) biosynthesis; lipid IV(A) from (3R)-3-hydroxytetradecanoyl-[acyl-carrier-protein] and UDP-N-acetyl-alpha-D-glucosamine: step 4/6. Hydrolyzes the pyrophosphate bond of UDP-2,3-diacylglucosamine to yield 2,3-diacylglucosamine 1-phosphate (lipid X) and UMP by catalyzing the attack of water at the alpha-P atom. Involved in the biosynthesis of lipid A, a phosphorylated glycolipid that anchors the lipopolysaccharide to the outer membrane of the cell. This is UDP-2,3-diacylglucosamine hydrolase from Aromatoleum aromaticum (strain DSM 19018 / LMG 30748 / EbN1) (Azoarcus sp. (strain EbN1)).